A 471-amino-acid chain; its full sequence is Argininosuccinate lyase (471 aa).

It belongs to the lyase 1 family. Argininosuccinate lyase subfamily.

The protein localises to the cytoplasm. The catalysed reaction is 2-(N(omega)-L-arginino)succinate = fumarate + L-arginine. It participates in amino-acid biosynthesis; L-arginine biosynthesis; L-arginine from L-ornithine and carbamoyl phosphate: step 3/3. The sequence is that of Argininosuccinate lyase from Cereibacter sphaeroides (strain ATCC 17023 / DSM 158 / JCM 6121 / CCUG 31486 / LMG 2827 / NBRC 12203 / NCIMB 8253 / ATH 2.4.1.) (Rhodobacter sphaeroides).